Here is a 163-residue protein sequence, read N- to C-terminus: CASP-like protein 1C2 (163 aa).

Over 1–6 (MAKSNK) the chain is Cytoplasmic. Residues 7-27 (IFTNTLRLLALAATVVAIVFM) form a helical membrane-spanning segment. Residues 28–52 (VTSHDSAQVLNLTFTAKYSNTPAFK) lie on the Extracellular side of the membrane. Residue Asn-38 is glycosylated (N-linked (GlcNAc...) asparagine). A helical transmembrane segment spans residues 53–73 (FLVIGEAIAGGYTVISILLSF). Residues 74 to 79 (KGLFWR) are Cytoplasmic-facing. Residues 80 to 100 (LIVILDMVTTVLLTSSISAAL) traverse the membrane as a helical segment. The Extracellular segment spans residues 101–128 (AIAQVGKKGNTHAGWLPICGQVPDFCDY). A helical transmembrane segment spans residues 129–149 (VTIALIAGFAAAIIYFVLLLC). Over 150 to 163 (SLYVVLSPIFVATP) the chain is Cytoplasmic.

The protein belongs to the Casparian strip membrane proteins (CASP) family. Homodimer and heterodimers.

The protein localises to the cell membrane. The protein is CASP-like protein 1C2 of Populus trichocarpa (Western balsam poplar).